The chain runs to 153 residues: Arginine repressor (153 aa).

This sequence belongs to the ArgR family.

Its subcellular location is the cytoplasm. It functions in the pathway amino-acid biosynthesis; L-arginine biosynthesis [regulation]. In terms of biological role, regulates arginine biosynthesis genes. This chain is Arginine repressor, found in Actinobacillus pleuropneumoniae serotype 7 (strain AP76).